A 124-amino-acid chain; its full sequence is uncharacterized protein (124 aa).

This is an uncharacterized protein from Saccharomyces cerevisiae (strain ATCC 204508 / S288c) (Baker's yeast).